The primary structure comprises 607 residues: UvrABC system protein C (607 aa).

Positions 16 to 94 constitute a GIY-YIG domain; it reads GRPGVYRMFD…IKEWRPPYNI (79 aa). Positions 203-238 constitute a UVR domain; it reads NALSDELNATMEKAAMALDFERAAELRDQVALLRRV.

Belongs to the UvrC family. As to quaternary structure, interacts with UvrB in an incision complex.

Its subcellular location is the cytoplasm. Functionally, the UvrABC repair system catalyzes the recognition and processing of DNA lesions. UvrC both incises the 5' and 3' sides of the lesion. The N-terminal half is responsible for the 3' incision and the C-terminal half is responsible for the 5' incision. The protein is UvrABC system protein C of Pseudomonas savastanoi pv. phaseolicola (strain 1448A / Race 6) (Pseudomonas syringae pv. phaseolicola (strain 1448A / Race 6)).